Reading from the N-terminus, the 446-residue chain is GTPase Der (446 aa).

2 EngA-type G domains span residues 3-168 (PVIA…YAGQ) and 181-354 (IKIA…KAAM). GTP-binding positions include 9 to 16 (GRPNVGKS), 57 to 61 (DTGGF), 120 to 123 (NKAE), 187 to 194 (GRPNVGKS), 234 to 238 (DTAGL), and 299 to 302 (NKWD). Residues 355–439 (SKLPTPKLTR…PLRIEFRSST (85 aa)) form the KH-like domain.

Belongs to the TRAFAC class TrmE-Era-EngA-EngB-Septin-like GTPase superfamily. EngA (Der) GTPase family. Associates with the 50S ribosomal subunit.

GTPase that plays an essential role in the late steps of ribosome biogenesis. In Paraburkholderia phymatum (strain DSM 17167 / CIP 108236 / LMG 21445 / STM815) (Burkholderia phymatum), this protein is GTPase Der.